The primary structure comprises 155 residues: Small ribosomal subunit protein uS7c (155 aa).

It belongs to the universal ribosomal protein uS7 family. Part of the 30S ribosomal subunit.

Its subcellular location is the plastid. It localises to the chloroplast. Its function is as follows. One of the primary rRNA binding proteins, it binds directly to 16S rRNA where it nucleates assembly of the head domain of the 30S subunit. The polypeptide is Small ribosomal subunit protein uS7c (rps7) (Sagittaria latifolia (Broadleaf arrowhead)).